Consider the following 152-residue polypeptide: MKTTIRKISARKSIALVAHDSCKQSLIQWTLQHKASLTPHTLYATGTTGHLLARESGLNIQALLSGPMGGDQQLGGLIAEKKIDILIFFWDPMNAAPHDPDVKALMRIATVWNIPVAINETSANFLLSAALFDQEIGINVPDYDGYLAERLA.

The region spanning 6–152 is the MGS-like domain; that stretch reads RKISARKSIA…YDGYLAERLA (147 aa). Residues H19, K23, 45–48, and 65–66 contribute to the substrate site; these read TGTT and SG. D71 serves as the catalytic Proton donor/acceptor. Position 98 (H98) interacts with substrate.

This sequence belongs to the methylglyoxal synthase family.

The enzyme catalyses dihydroxyacetone phosphate = methylglyoxal + phosphate. Functionally, catalyzes the formation of methylglyoxal from dihydroxyacetone phosphate. The protein is Methylglyoxal synthase of Actinobacillus pleuropneumoniae serotype 3 (strain JL03).